Consider the following 503-residue polypeptide: Putative aldehyde dehydrogenase-like protein C9E9.09c (503 aa).

247 to 252 (GSTGVG) is a binding site for NAD(+). Serine 248 is subject to Phosphoserine. Catalysis depends on glutamate 270, which acts as the Proton acceptor. Cysteine 304 functions as the Nucleophile in the catalytic mechanism. The residue at position 501 (serine 501) is a Phosphoserine.

The protein belongs to the aldehyde dehydrogenase family.

This is Putative aldehyde dehydrogenase-like protein C9E9.09c from Schizosaccharomyces pombe (strain 972 / ATCC 24843) (Fission yeast).